The primary structure comprises 738 residues: MCGKSLLCVASLLASAYLVYCTQYVTVFYGVPVWRNASIPLFCATKNRDTWGTIQCKPDNDDYQEITLNVTEAFDAWDNTVTEQAVEDVWSLFETSIKPCVKLTPLCVAMSCNSTTNNTTTTGSTTGMSEINETSPSYSDNCTGLGKEEIVNCQFYMTGLERDKKKQYNETWYSKDVVCESNNTKDGKNRCYMNHCNTSVITESCDKHYWDAIKFRYCAPPGYALLRCNDTNYSGFEPKCSKVVASTCTRMMETQTSTWFGFNGTRAENRTYIYWHGRDNRTIISLNKYYNLSIHCKRPGNKTVVPITLMSGLVFHSQPINTRPRQAWCWFKGKWREAMQEVKQTLIKHPRYKGTNDTKNINFTKPGRGSDPEVAYMWTNCRGEFLYCNMTWFLNWVENRPNQTQHNYAPCHIRQIINTWHKVGKNVYLPPREGQLTCNSTVTSIIANIDVNSNQTNITFSAEVAELYRLELGDYKLIEVTPIGFAPTREKRYSSAPVRNKRGVFVLGFLGFLATAGSAMGAASLTLSAQSRTLLAGIVQQQQQLLDVVKRQQEMLRLTVWGTKNLQARVTAIEKYLKDQAQLNSWGCAFRQVCHTTVPWVNDSLSPDWNNMTWQEWEKQVRYLEANISQSLEQAQIQQEKNMYELQKLNSWDVFGNWFDLTSWIKYIQYGVYIVVGVIVLRIAIYIVQLLSRLRKGYRPVFSSPPGYLQQIHIHTDRGQPANEGTEEDDRDDDGYDL.

A signal peptide spans 1 to 21 (MCGKSLLCVASLLASAYLVYC). Residues 22–670 (TQYVTVFYGV…LTSWIKYIQY (649 aa)) are Extracellular-facing. Asparagine 36 is a glycosylation site (N-linked (GlcNAc...) asparagine; by host). Cysteines 43 and 56 form a disulfide. 23 N-linked (GlcNAc...) asparagine; by host glycosylation sites follow: asparagine 69, asparagine 113, asparagine 117, asparagine 118, asparagine 132, asparagine 141, asparagine 169, asparagine 182, asparagine 197, asparagine 229, asparagine 232, asparagine 263, asparagine 269, asparagine 280, asparagine 291, asparagine 301, asparagine 356, asparagine 362, asparagine 389, asparagine 402, asparagine 439, asparagine 454, and asparagine 457. 5 disulfides stabilise this stretch: cysteine 100/cysteine 205, cysteine 107/cysteine 196, cysteine 112/cysteine 153, cysteine 218/cysteine 248, and cysteine 228/cysteine 240. Residues 112–152 (CNSTTNNTTTTGSTTGMSEINETSPSYSDNCTGLGKEEIVN) form a V1 region. Positions 153 to 196 (CQFYMTGLERDKKKQYNETWYSKDVVCESNNTKDGKNRCYMNHC) are V2. The tract at residues 296–328 (CKRPGNKTVVPITLMSGLVFHSQPINTRPRQAW) is V3. Cysteine 296 and cysteine 329 form a disulfide bridge. 2 cysteine pairs are disulfide-bonded: cysteine 381/cysteine 438 and cysteine 388/cysteine 411. The V4 stretch occupies residues 388–411 (CNMTWFLNWVENRPNQTQHNYAPC). Residues 454-460 (NQTNITF) are V5. The tract at residues 503-523 (GVFVLGFLGFLATAGSAMGAA) is fusion peptide. Residues 566-582 (LQARVTAIEKYLKDQAQ) form an immunosuppression region. Residues asparagine 602, asparagine 611, and asparagine 627 are each glycosylated (N-linked (GlcNAc...) asparagine; by host). Positions 615 to 636 (QEWEKQVRYLEANISQSLEQAQ) form a coiled coil. The segment at 648-669 (KLNSWDVFGNWFDLTSWIKYIQ) is MPER; binding to GalCer. A helical transmembrane segment spans residues 671 to 691 (GVYIVVGVIVLRIAIYIVQLL). Topologically, residues 692–738 (SRLRKGYRPVFSSPPGYLQQIHIHTDRGQPANEGTEEDDRDDDGYDL) are cytoplasmic. The YXXV motif; contains endocytosis signal signature appears at 698–701 (YRPV). The disordered stretch occupies residues 716-738 (TDRGQPANEGTEEDDRDDDGYDL). A compositionally biased stretch (acidic residues) spans 725–738 (GTEEDDRDDDGYDL).

As to quaternary structure, the mature envelope protein (Env) consists of a homotrimer of non-covalently associated gp120-gp41 heterodimers. The resulting complex protrudes from the virus surface as a spike. There seems to be as few as 10 spikes on the average virion. Interacts with human CD4, CCR5 and CXCR4, to form a P4HB/PDI-CD4-CXCR4-gp120 complex. Gp120 also interacts with the C-type lectins CD209/DC-SIGN and CLEC4M/DC-SIGNR (collectively referred to as DC-SIGN(R)). Gp120 and gp41 interact with GalCer. In terms of assembly, the mature envelope protein (Env) consists of a homotrimer of non-covalently associated gp120-gp41 heterodimers. The resulting complex protrudes from the virus surface as a spike. There seems to be as few as 10 spikes on the average virion. In terms of processing, specific enzymatic cleavages in vivo yield mature proteins. Envelope glycoproteins are synthesized as an inactive precursor that is heavily N-glycosylated and processed likely by host cell furin in the Golgi to yield the mature SU and TM proteins. The cleavage site between SU and TM requires the minimal sequence [KR]-X-[KR]-R. Palmitoylation of the transmembrane protein and of Env polyprotein (prior to its proteolytic cleavage) is essential for their association with host cell membrane lipid rafts. Palmitoylation is therefore required for envelope trafficking to classical lipid rafts, but not for viral replication.

It localises to the virion membrane. The protein resides in the host cell membrane. It is found in the host endosome membrane. Its function is as follows. The surface protein gp120 (SU) attaches the virus to the host lymphoid cell by binding to the primary receptor CD4. This interaction induces a structural rearrangement creating a high affinity binding site for a chemokine coreceptor like CXCR4 and/or CCR5. This peculiar 2 stage receptor-interaction strategy allows gp120 to maintain the highly conserved coreceptor-binding site in a cryptic conformation, protected from neutralizing antibodies. Since CD4 also displays a binding site for the disulfide-isomerase P4HB/PDI, a P4HB/PDI-CD4-CXCR4-gp120 complex may form. In that complex, P4HB/PDI could reach and reduce gp120 disulfide bonds, causing major conformational changes in gp120. TXN, another PDI family member could also be involved in disulfide rearrangements in Env during fusion. These changes are transmitted to the transmembrane protein gp41 and are thought to activate its fusogenic potential by unmasking its fusion peptide. Functionally, the surface protein gp120 is a ligand for CD209/DC-SIGN and CLEC4M/DC-SIGNR, which are respectively found on dendritic cells (DCs), and on endothelial cells of liver sinusoids and lymph node sinuses. These interactions allow capture of viral particles at mucosal surfaces by these cells and subsequent transmission to permissive cells. DCs are professional antigen presenting cells, critical for host immunity by inducing specific immune responses against a broad variety of pathogens. They act as sentinels in various tissues where they take up antigen, process it, and present it to T-cells following migration to lymphoid organs. HIV subverts the migration properties of dendritic cells to gain access to CD4+ T-cells in lymph nodes. Virus transmission to permissive T-cells occurs either in trans (without DCs infection, through viral capture and transmission), or in cis (following DCs productive infection, through the usual CD4-gp120 interaction), thereby inducing a robust infection. In trans infection, bound virions remain infectious over days and it is proposed that they are not degraded, but protected in non-lysosomal acidic organelles within the DCs close to the cell membrane thus contributing to the viral infectious potential during DCs' migration from the periphery to the lymphoid tissues. On arrival at lymphoid tissues, intact virions recycle back to DCs' cell surface allowing virus transmission to CD4+ T-cells. Virion capture also seems to lead to MHC-II-restricted viral antigen presentation, and probably to the activation of HIV-specific CD4+ cells. In terms of biological role, the transmembrane protein gp41 (TM) acts as a class I viral fusion protein. Under the current model, the protein has at least 3 conformational states: pre-fusion native state, pre-hairpin intermediate state, and post-fusion hairpin state. During fusion of viral and target intracellular membranes, the coiled coil regions (heptad repeats) assume a trimer-of-hairpins structure, positioning the fusion peptide in close proximity to the C-terminal region of the ectodomain. The formation of this structure appears to drive apposition and subsequent fusion of viral and target cell membranes. Complete fusion occurs in host cell endosomes and is dynamin-dependent, however some lipid transfer might occur at the plasma membrane. The virus undergoes clathrin-dependent internalization long before endosomal fusion, thus minimizing the surface exposure of conserved viral epitopes during fusion and reducing the efficacy of inhibitors targeting these epitopes. Membranes fusion leads to delivery of the nucleocapsid into the cytoplasm. The envelope glycoprotein gp160 precursor down-modulates cell surface CD4 antigen by interacting with it in the endoplasmic reticulum and blocking its transport to the cell surface. Its function is as follows. The gp120-gp41 heterodimer seems to contribute to T-cell depletion during HIV-1 infection. The envelope glycoproteins expressed on the surface of infected cells induce apoptosis through an interaction with uninfected cells expressing the receptor (CD4) and the coreceptors CXCR4 or CCR5. This type of bystander killing may be obtained by at least three distinct mechanisms. First, the interaction between the 2 cells can induce cellular fusion followed by nuclear fusion within the syncytium. Syncytia are condemned to die from apoptosis. Second, the 2 interacting cells may not fuse entirely and simply exchange plasma membrane lipids, after a sort of hemifusion process, followed by rapid death. Third, it is possible that virus-infected cells, on the point of undergoing apoptosis, fuse with CD4-expressing cells, in which case apoptosis is rapidly transmitted from one cell to the other and thus occurs in a sort of contagious fashion. Functionally, the gp120-gp41 heterodimer allows rapid transcytosis of the virus through CD4 negative cells such as simple epithelial monolayers of the intestinal, rectal and endocervical epithelial barriers. Both gp120 and gp41 specifically recognize glycosphingolipids galactosyl-ceramide (GalCer) or 3' sulfo-galactosyl-ceramide (GalS) present in the lipid rafts structures of epithelial cells. Binding to these alternative receptors allows the rapid transcytosis of the virus through the epithelial cells. This transcytotic vesicle-mediated transport of virions from the apical side to the basolateral side of the epithelial cells does not involve infection of the cells themselves. The protein is Envelope glycoprotein gp160 (env) of Human immunodeficiency virus type 2 subtype A (isolate Ghana-1) (HIV-2).